The sequence spans 179 residues: MSRLQEQYKNKISLILQKELGMSNPMQTPKIEKITINMGLGNALGDKKILQSGLEEMSLISGQKPLTCNARKSVASFKLREGNPIGCKVTLRKQKMYEFLDRLVNITIPRIRDFRGLKTTAFDGRGNYNMGITEQITFPEIDFEKVTKIRGMDIAITTTAKSDEDAKKLLAMFKFPFKG.

This sequence belongs to the universal ribosomal protein uL5 family. In terms of assembly, part of the 50S ribosomal subunit; part of the 5S rRNA/L5/L18/L25 subcomplex. Contacts the 5S rRNA and the P site tRNA. Forms a bridge to the 30S subunit in the 70S ribosome.

This is one of the proteins that bind and probably mediate the attachment of the 5S RNA into the large ribosomal subunit, where it forms part of the central protuberance. In the 70S ribosome it contacts protein S13 of the 30S subunit (bridge B1b), connecting the 2 subunits; this bridge is implicated in subunit movement. Contacts the P site tRNA; the 5S rRNA and some of its associated proteins might help stabilize positioning of ribosome-bound tRNAs. This chain is Large ribosomal subunit protein uL5, found in Vesicomyosocius okutanii subsp. Calyptogena okutanii (strain HA).